A 315-amino-acid chain; its full sequence is Ankyrin repeat domain-containing protein 54 (315 aa).

The interval 1–49 is disordered; the sequence is MDGSSPLLAAAGSDGDRSSSEGEYTLAGGPSAGDTEKREGESPMEAAGA. 4 ANK repeats span residues 124 to 153, 157 to 186, 190 to 219, and 223 to 255; these read HAVK…DPCA, KGRT…DPNQ, LGNT…RVDA, and AGRT…EVTQ.

The protein resides in the nucleus. It is found in the cytoplasm. The protein localises to the midbody. Plays an important role in regulating intracellular signaling events associated with erythroid terminal differentiation. This Danio rerio (Zebrafish) protein is Ankyrin repeat domain-containing protein 54 (ankrd54).